The following is a 153-amino-acid chain: Small ribosomal subunit protein uS19A (153 aa).

The protein belongs to the universal ribosomal protein uS19 family. In terms of assembly, component of the small ribosomal subunit (SSU). Mature yeast ribosomes consist of a small (40S) and a large (60S) subunit. The 40S small subunit contains 1 molecule of ribosomal RNA (18S rRNA) and at least 33 different proteins. The large 60S subunit contains 3 rRNA molecules (25S, 5.8S and 5S rRNA) and at least 46 different proteins.

Its subcellular location is the cytoplasm. It localises to the nucleus. The protein localises to the nucleolus. Component of the ribosome, a large ribonucleoprotein complex responsible for the synthesis of proteins in the cell. The small ribosomal subunit (SSU) binds messenger RNAs (mRNAs) and translates the encoded message by selecting cognate aminoacyl-transfer RNA (tRNA) molecules. The large subunit (LSU) contains the ribosomal catalytic site termed the peptidyl transferase center (PTC), which catalyzes the formation of peptide bonds, thereby polymerizing the amino acids delivered by tRNAs into a polypeptide chain. The nascent polypeptides leave the ribosome through a tunnel in the LSU and interact with protein factors that function in enzymatic processing, targeting, and the membrane insertion of nascent chains at the exit of the ribosomal tunnel. uS19 is involved in the nuclear export of the small ribosomal subunit precursor. Has a role in the late stage of the assembly of pre-40S particles within the nucleus and controls their export to the cytoplasm. The sequence is that of Small ribosomal subunit protein uS19A (rps1501) from Schizosaccharomyces pombe (strain 972 / ATCC 24843) (Fission yeast).